A 345-amino-acid chain; its full sequence is KRR1 small subunit processome component homolog (345 aa).

In terms of domain architecture, KH spans 125–193; it reads DIIKIGNLVH…VRDIVLETMN (69 aa). Over residues 232-245 the composition is skewed to basic residues; it reads NISKRKQPKVKKQK. Disordered stretches follow at residues 232-260 and 273-329; these read NISK…ESKV and QEQK…VDVK. Residues 270–298 adopt a coiled-coil conformation; the sequence is FLNQEQKQAKRNQERTEKQKEAAKRQDER. Basic and acidic residues-rich tracts occupy residues 276-302 and 315-329; these read KQAK…RNKD and LKKE…VDVK.

It belongs to the KRR1 family. In terms of assembly, monomer. Component of the ribosomal small subunit (SSU) processome.

Its subcellular location is the nucleus. It localises to the nucleolus. Functionally, required for 40S ribosome biogenesis. Involved in nucleolar processing of pre-18S ribosomal RNA and ribosome assembly. Binds to RNA. Required for female germline development, cell viability during eye development and for survival of dividing cells and epithelial cells during early wing disk development. The sequence is that of KRR1 small subunit processome component homolog from Drosophila erecta (Fruit fly).